The chain runs to 427 residues: MWKHVKQVDPEIYEVLVNELKRQEYGLELIASENFASLAVIETMGSMLTNKYAEGYPKKRYYGGCEWVDRAEERAIERAKRLFGAKFANVQPHSGSQANMAVYLALAQPGDTIMGMSLSHGGHLTHGAPVNFSGKIFKVVPYGVNLETETIDYDEVRRLALEHKPKIIVAGGSAYARIIDFKRFREIADEVGAYLMVDMAHFAGLVAAGIHPNPLEYAHVVTSTTHKTLRGPRGGLILTNDPEIAKAVDKTIFPGIQGGPLMHVIAAKAVCFKEAMTEEFKEYQKQVVKNAKKMAEEFQKRGYRIVSGGTDTHLFLVDLTPKDITGKAAEKALESCGITVNKNTIPNEKRSPFVASGIRIGTPAVTTRGMKEEEMEEIAEMIDLVLSNVIDENGTVKPEVREEVSKKVRELCERFPLYRDKIEGVEI.

(6S)-5,6,7,8-tetrahydrofolate contacts are provided by residues Leu-118 and 122–124 (GHL). Residue Lys-227 is modified to N6-(pyridoxal phosphate)lysine. Residues Glu-243 and 351–353 (SPF) contribute to the (6S)-5,6,7,8-tetrahydrofolate site.

Belongs to the SHMT family. As to quaternary structure, homodimer. It depends on pyridoxal 5'-phosphate as a cofactor.

It is found in the cytoplasm. The catalysed reaction is (6R)-5,10-methylene-5,6,7,8-tetrahydrofolate + glycine + H2O = (6S)-5,6,7,8-tetrahydrofolate + L-serine. It participates in one-carbon metabolism; tetrahydrofolate interconversion. It functions in the pathway amino-acid biosynthesis; glycine biosynthesis; glycine from L-serine: step 1/1. Catalyzes the reversible interconversion of serine and glycine with tetrahydrofolate (THF) serving as the one-carbon carrier. This reaction serves as the major source of one-carbon groups required for the biosynthesis of purines, thymidylate, methionine, and other important biomolecules. Also exhibits THF-independent aldolase activity toward beta-hydroxyamino acids, producing glycine and aldehydes, via a retro-aldol mechanism. The sequence is that of Serine hydroxymethyltransferase from Thermotoga maritima (strain ATCC 43589 / DSM 3109 / JCM 10099 / NBRC 100826 / MSB8).